A 935-amino-acid polypeptide reads, in one-letter code: Protein translocase subunit SecA (935 aa).

ATP contacts are provided by residues Gln-90, 108–112 (GEGKT), and Asp-504.

It belongs to the SecA family. In terms of assembly, monomer and homodimer. Part of the essential Sec protein translocation apparatus which comprises SecA, SecYEG and auxiliary proteins SecDF. Other proteins may also be involved.

It is found in the cell inner membrane. The protein resides in the cellular thylakoid membrane. The protein localises to the cytoplasm. It catalyses the reaction ATP + H2O + cellular proteinSide 1 = ADP + phosphate + cellular proteinSide 2.. In terms of biological role, part of the Sec protein translocase complex. Interacts with the SecYEG preprotein conducting channel. Has a central role in coupling the hydrolysis of ATP to the transfer of proteins into and across the cell membrane, serving as an ATP-driven molecular motor driving the stepwise translocation of polypeptide chains across the membrane. Probably participates in protein translocation into and across both the cytoplasmic and thylakoid membranes in cyanobacterial cells. The sequence is that of Protein translocase subunit SecA from Gloeothece citriformis (strain PCC 7424) (Cyanothece sp. (strain PCC 7424)).